The chain runs to 684 residues: DNA ligase (684 aa).

Residues 34–38 (DYDFD), 83–84 (SL), and Glu-117 each bind NAD(+). The active-site N6-AMP-lysine intermediate is the Lys-119. The NAD(+) site is built by Arg-140, Glu-188, Lys-301, and Lys-325. Zn(2+) is bound by residues Cys-419, Cys-422, Cys-437, and Cys-443. The region spanning 602–684 (DAPQTFAGMT…QTMLAAESGD (83 aa)) is the BRCT domain.

It belongs to the NAD-dependent DNA ligase family. LigA subfamily. It depends on Mg(2+) as a cofactor. Requires Mn(2+) as cofactor.

It catalyses the reaction NAD(+) + (deoxyribonucleotide)n-3'-hydroxyl + 5'-phospho-(deoxyribonucleotide)m = (deoxyribonucleotide)n+m + AMP + beta-nicotinamide D-nucleotide.. Functionally, DNA ligase that catalyzes the formation of phosphodiester linkages between 5'-phosphoryl and 3'-hydroxyl groups in double-stranded DNA using NAD as a coenzyme and as the energy source for the reaction. It is essential for DNA replication and repair of damaged DNA. This Chloroherpeton thalassium (strain ATCC 35110 / GB-78) protein is DNA ligase.